Consider the following 391-residue polypeptide: 3-ketoacyl-CoA thiolase (391 aa).

The active-site Acyl-thioester intermediate is cysteine 95. Active-site proton acceptor residues include histidine 347 and cysteine 377.

The protein belongs to the thiolase-like superfamily. Thiolase family. As to quaternary structure, heterotetramer of two alpha chains (FadB) and two beta chains (FadA).

It localises to the cytoplasm. The catalysed reaction is an acyl-CoA + acetyl-CoA = a 3-oxoacyl-CoA + CoA. Its pathway is lipid metabolism; fatty acid beta-oxidation. Functionally, catalyzes the final step of fatty acid oxidation in which acetyl-CoA is released and the CoA ester of a fatty acid two carbons shorter is formed. This chain is 3-ketoacyl-CoA thiolase, found in Ectopseudomonas oleovorans (Pseudomonas oleovorans).